Consider the following 248-residue polypeptide: MTIRVGVLGARGKVGQAICAAVRAADDLELVAEVDKGDALETFTETGTEVVVDFTHPDVVMGNLKFLVEHGIHAVVGTTGFDAARLDEVRGWLAASPATGVLIAPNFAIGAVLSMRFAEQAARFFESVEVIELHHPNKADAPSGTAYRTAGLIAEARNRAGVGRSPDATSTELDGARGADVDGVRVHSVRLAGLVAHQEVLFGTQGETLTIRHDSIDRSSFAPGVLLGVREIGKRPGLTVGLDPFLDL.

NAD(+) contacts are provided by residues Gly-9 to Val-14, Gly-77 to Thr-79, and Ala-104 to Phe-107. Catalysis depends on His-134, which acts as the Proton donor/acceptor. His-135 is a (S)-2,3,4,5-tetrahydrodipicolinate binding site. Lys-138 functions as the Proton donor in the catalytic mechanism. Gly-144–Thr-145 provides a ligand contact to (S)-2,3,4,5-tetrahydrodipicolinate.

The protein belongs to the DapB family.

It is found in the cytoplasm. It carries out the reaction (S)-2,3,4,5-tetrahydrodipicolinate + NAD(+) + H2O = (2S,4S)-4-hydroxy-2,3,4,5-tetrahydrodipicolinate + NADH + H(+). The catalysed reaction is (S)-2,3,4,5-tetrahydrodipicolinate + NADP(+) + H2O = (2S,4S)-4-hydroxy-2,3,4,5-tetrahydrodipicolinate + NADPH + H(+). It functions in the pathway amino-acid biosynthesis; L-lysine biosynthesis via DAP pathway; (S)-tetrahydrodipicolinate from L-aspartate: step 4/4. In terms of biological role, catalyzes the conversion of 4-hydroxy-tetrahydrodipicolinate (HTPA) to tetrahydrodipicolinate. In Nocardia farcinica (strain IFM 10152), this protein is 4-hydroxy-tetrahydrodipicolinate reductase.